Consider the following 452-residue polypeptide: Enolase (452 aa).

Gln167 provides a ligand contact to (2R)-2-phosphoglycerate. Glu209 serves as the catalytic Proton donor. The Mg(2+) site is built by Asp250, Glu307, and Asp334. Residues Lys359, Arg388, Ser389, and Lys410 each contribute to the (2R)-2-phosphoglycerate site. Catalysis depends on Lys359, which acts as the Proton acceptor.

This sequence belongs to the enolase family. The cofactor is Mg(2+).

It is found in the cytoplasm. The protein localises to the secreted. Its subcellular location is the cell surface. The catalysed reaction is (2R)-2-phosphoglycerate = phosphoenolpyruvate + H2O. It participates in carbohydrate degradation; glycolysis; pyruvate from D-glyceraldehyde 3-phosphate: step 4/5. Catalyzes the reversible conversion of 2-phosphoglycerate (2-PG) into phosphoenolpyruvate (PEP). It is essential for the degradation of carbohydrates via glycolysis. The protein is Enolase of Mesomycoplasma hyopneumoniae (strain 7448) (Mycoplasma hyopneumoniae).